The primary structure comprises 308 residues: Dioxygenase peniF (308 aa).

Fe cation is bound by residues His-144 and His-225.

Belongs to the PhyH family. Homodimer. The cofactor is Fe cation.

In terms of biological role, dioxygenase; part of the gene cluster that mediates the biosynthesis of penifulvin A, a potent insecticidal sesquiterpene that features a [5.5.5.6]dioxafenestrane ring. The first step of the pathway is performed by the sesquiterpene cyclase peniA that generates the angular triquinane scaffold silphinene via cyclization of the linear farnesyl pyrophosphate (FPP). The cytochrome P450 monooxygenase peniB and the flavin-dependent monooxygenase peniC then catalyze a series of oxidation reactions to transform silphinene into penifulvin A. The dioxygenases peniD and peniF, as well as the acetyltransferase peniE, do not seem to be involved in the biosynthesis of penifulvin A. The protein is Dioxygenase peniF of Penicillium patulum (Penicillium griseofulvum).